Consider the following 504-residue polypeptide: Anaerobic nitric oxide reductase transcription regulator NorR (504 aa).

Asp57 carries the 4-aspartylphosphate modification. The region spanning 187 to 416 (MIGLSPGMTQ…LEHAIHRAVV (230 aa)) is the Sigma-54 factor interaction domain. ATP contacts are provided by residues 215 to 222 (GETGTGKE) and 278 to 287 (ADNGTLFLDE). The segment at residues 479–498 (WAASARMLETDVANLHRLAK) is a DNA-binding region (H-T-H motif).

Its pathway is nitrogen metabolism; nitric oxide reduction. Functionally, required for the expression of anaerobic nitric oxide (NO) reductase, acts as a transcriptional activator for at least the norVW operon. Activation also requires sigma-54. This Escherichia fergusonii (strain ATCC 35469 / DSM 13698 / CCUG 18766 / IAM 14443 / JCM 21226 / LMG 7866 / NBRC 102419 / NCTC 12128 / CDC 0568-73) protein is Anaerobic nitric oxide reductase transcription regulator NorR.